Consider the following 345-residue polypeptide: Opioid-binding protein/cell adhesion molecule (345 aa).

The first 27 residues, 1–27 (MGVCGSLFQPWKCLVVVSLRLLFLVPT), serve as a signal peptide directing secretion. Ig-like C2-type domains lie at 39-126 (PKAM…PKTS), 136-219 (PQIM…VKIT), and 223-310 (PPYI…ASIT). 3 N-linked (GlcNAc...) asparagine glycosylation sites follow: asparagine 44, asparagine 70, and asparagine 140. Cysteine 57 and cysteine 115 form a disulfide bridge. 2 disulfides stabilise this stretch: cysteine 157-cysteine 202 and cysteine 244-cysteine 296. N-linked (GlcNAc...) asparagine glycosylation is found at asparagine 285, asparagine 293, and asparagine 306. A lipid anchor (GPI-anchor amidated asparagine) is attached at asparagine 322. The propeptide at 323 to 345 (SASRALACLWLSGTLFAHFFIKF) is removed in mature form.

Belongs to the immunoglobulin superfamily. IgLON family.

It localises to the cell membrane. In terms of biological role, binds opioids in the presence of acidic lipids; probably involved in cell contact. The protein is Opioid-binding protein/cell adhesion molecule (OPCML) of Bos taurus (Bovine).